The following is a 391-amino-acid chain: Chaperone protein DnaJ (391 aa).

The J domain maps to 6–71; the sequence is CYYEVLKVER…NKRARYDQYG (66 aa). Residues 137–215 form a CR-type zinc finger; it reads GCHKDIVFRR…CRGTGTQNEK (79 aa). The Zn(2+) site is built by Cys150, Cys153, Cys167, Cys170, Cys189, Cys192, Cys203, and Cys206. CXXCXGXG motif repeat units lie at residues 150–157, 167–174, 189–196, and 203–210; these read CDTCDGSG, CTMCGGQG, CPTCKGAG, and CGKCRGTG. Positions 372–391 are disordered; the sequence is FFDPEPEEAGTGSTDTEKDS.

This sequence belongs to the DnaJ family. As to quaternary structure, homodimer. Zn(2+) is required as a cofactor.

Its subcellular location is the cytoplasm. Its function is as follows. Participates actively in the response to hyperosmotic and heat shock by preventing the aggregation of stress-denatured proteins and by disaggregating proteins, also in an autonomous, DnaK-independent fashion. Unfolded proteins bind initially to DnaJ; upon interaction with the DnaJ-bound protein, DnaK hydrolyzes its bound ATP, resulting in the formation of a stable complex. GrpE releases ADP from DnaK; ATP binding to DnaK triggers the release of the substrate protein, thus completing the reaction cycle. Several rounds of ATP-dependent interactions between DnaJ, DnaK and GrpE are required for fully efficient folding. Also involved, together with DnaK and GrpE, in the DNA replication of plasmids through activation of initiation proteins. This chain is Chaperone protein DnaJ, found in Rhodopirellula baltica (strain DSM 10527 / NCIMB 13988 / SH1).